The sequence spans 547 residues: Mercuric reductase (547 aa).

One can recognise an HMA domain in the interval 5 to 70 (APTELAITGM…AVVASGYGVH (66 aa)). A metal cation-binding residues include C16 and C19. FAD is bound by residues A96 and T121. The cysteines at positions 122 and 127 are disulfide-linked. K131, A197, D389, and V397 together coordinate FAD. Hg(2+) contacts are provided by C544 and C545.

Belongs to the class-I pyridine nucleotide-disulfide oxidoreductase family. In terms of assembly, homodimer. FAD serves as cofactor.

The catalysed reaction is Hg + NADP(+) + H(+) = Hg(2+) + NADPH. Resistance to Hg(2+) in bacteria appears to be governed by a specialized system which includes mercuric reductase. MerA protein is responsible for volatilizing mercury as Hg(0). The polypeptide is Mercuric reductase (merA) (Acidithiobacillus ferrooxidans (Thiobacillus ferrooxidans)).